A 383-amino-acid polypeptide reads, in one-letter code: Adaptive-response sensory kinase SasA (383 aa).

Positions 152-365 constitute a Histidine kinase domain; the sequence is MVAHELRTPL…CFTFNVPIWQ (214 aa). His155 carries the post-translational modification Phosphohistidine; by autocatalysis.

As to quaternary structure, homooligomerizes. Interacts with KaiC. Participates in the KaiABC clock complex, whose core is composed of a KaiC homohexamer, 6 KaiB and up to 6 KaiA dimers. SasA and KaiB(fs) compete to bind to KaiC.

The catalysed reaction is ATP + protein L-histidine = ADP + protein N-phospho-L-histidine.. Functionally, member of the two-component regulatory system SasA/RpaA involved in genome-wide circadian gene expression. One of several clock output pathways. Participates in the Kai clock protein complex, the main circadian regulator in cyanobacteria, via its interaction with KaiC. KaiC enhances the autophosphorylation activity of SasA, which then transfers its phosphate group to RpaA to activate it. In addition to its output function, recruits fold-shifted KaiB (KaiB(fs)) to KaiC to cooperatively form the KaiB(6):KaiC(6) complex (independent of SasA kinase activity). Required for robustness of the circadian rhythm of gene expression and is involved in clock output, also required for adaptation to light/dark cycles. The sequence is that of Adaptive-response sensory kinase SasA from Synechococcus sp. (strain CC9311).